A 166-amino-acid polypeptide reads, in one-letter code: Crossover junction endodeoxyribonuclease RuvC (166 aa).

Catalysis depends on residues Asp11, Glu70, and Asp142. Mg(2+) contacts are provided by Asp11, Glu70, and Asp142.

The protein belongs to the RuvC family. Homodimer which binds Holliday junction (HJ) DNA. The HJ becomes 2-fold symmetrical on binding to RuvC with unstacked arms; it has a different conformation from HJ DNA in complex with RuvA. In the full resolvosome a probable DNA-RuvA(4)-RuvB(12)-RuvC(2) complex forms which resolves the HJ. Mg(2+) serves as cofactor.

It localises to the cytoplasm. The catalysed reaction is Endonucleolytic cleavage at a junction such as a reciprocal single-stranded crossover between two homologous DNA duplexes (Holliday junction).. Functionally, the RuvA-RuvB-RuvC complex processes Holliday junction (HJ) DNA during genetic recombination and DNA repair. Endonuclease that resolves HJ intermediates. Cleaves cruciform DNA by making single-stranded nicks across the HJ at symmetrical positions within the homologous arms, yielding a 5'-phosphate and a 3'-hydroxyl group; requires a central core of homology in the junction. The consensus cleavage sequence is 5'-(A/T)TT(C/G)-3'. Cleavage occurs on the 3'-side of the TT dinucleotide at the point of strand exchange. HJ branch migration catalyzed by RuvA-RuvB allows RuvC to scan DNA until it finds its consensus sequence, where it cleaves and resolves the cruciform DNA. This is Crossover junction endodeoxyribonuclease RuvC from Nitratidesulfovibrio vulgaris (strain DP4) (Desulfovibrio vulgaris).